A 152-amino-acid chain; its full sequence is Transcriptional regulator MraZ (152 aa).

2 consecutive SpoVT-AbrB domains span residues 5-52 (ASAI…PLKE) and 81-124 (ATEC…SDAE).

The protein belongs to the MraZ family. As to quaternary structure, forms oligomers.

The protein resides in the cytoplasm. It is found in the nucleoid. The protein is Transcriptional regulator MraZ of Pasteurella multocida (strain Pm70).